The sequence spans 158 residues: Cell number regulator 11 (158 aa).

2 helical membrane-spanning segments follow: residues F49–G67 and T78–W94.

It belongs to the cornifelin family.

It is found in the membrane. The polypeptide is Cell number regulator 11 (CNR11) (Zea mays (Maize)).